Consider the following 328-residue polypeptide: Phenylalanine--tRNA ligase alpha subunit (328 aa).

E245 is a binding site for Mg(2+).

This sequence belongs to the class-II aminoacyl-tRNA synthetase family. Phe-tRNA synthetase alpha subunit type 1 subfamily. As to quaternary structure, tetramer of two alpha and two beta subunits. Requires Mg(2+) as cofactor.

It localises to the cytoplasm. It catalyses the reaction tRNA(Phe) + L-phenylalanine + ATP = L-phenylalanyl-tRNA(Phe) + AMP + diphosphate + H(+). In Helicobacter acinonychis (strain Sheeba), this protein is Phenylalanine--tRNA ligase alpha subunit.